We begin with the raw amino-acid sequence, 528 residues long: Ribonuclease Y (528 aa).

A helical membrane pass occupies residues 15 to 35 (SLFFLALICGSIIGYFLYSFF). In terms of domain architecture, KH spans 217 to 277 (NISVVNIPNE…IRREIAKKTL (61 aa)). The HD domain maps to 343–436 (VLKHSLEVAF…VAIADTLSSA (94 aa)).

The protein belongs to the RNase Y family.

Its subcellular location is the cell membrane. In terms of biological role, endoribonuclease that initiates mRNA decay. The sequence is that of Ribonuclease Y from Aster yellows witches'-broom phytoplasma (strain AYWB).